The sequence spans 498 residues: Diacylglycerol O-acyltransferase 1 (498 aa).

The interval 1–66 (MGDRGGAGSS…AHTRDKDRQT (66 aa)) is disordered. Residues 1-92 (MGDRGGAGSS…SLFSSDSGFS (92 aa)) are Cytoplasmic-facing. The tract at residues 1–96 (MGDRGGAGSS…SDSGFSNYRG (96 aa)) is involved in homomerization. Serine 20 carries the phosphoserine modification. Over residues 58 to 68 (HTRDKDRQTSV) the composition is skewed to basic and acidic residues. A helical transmembrane segment spans residues 93–127 (NYRGILNWCVVMLILSNARLSLENLIKYGILVDPI). Residues 128–139 (QVVSLFLKDPYS) lie on the Lumenal side of the membrane. Residues 128-139 (QVVSLFLKDPYS) are extracellular loop 1 (EL1). The chain crosses the membrane as a helical span at residues 140–165 (WPAPCLIIASNIFIVATFQIEKRLSV). The tract at residues 140-498 (WPAPCLIIAS…VLNYDAPVGA (359 aa)) is MBOAT fold. At 166-170 (GALTE) the chain is on the cytoplasmic side. A helical membrane pass occupies residues 171–193 (QMGLLLHVVNLATIICFPAAVAL). At 194–200 (LVESITP) the chain is on the lumenal side. A helical membrane pass occupies residues 201 to 232 (VGSLFALASYSIIFLKLSSYRDVNLWCRQRRV). Over 233–284 (KAKAVSAGKKVSGAAAQNTVSYPDNLTYRDLYYFIFAPTLCYELNFPRSPRI) the chain is Cytoplasmic. Positions 235-287 (KAVSAGKKVSGAAAQNTVSYPDNLTYRDLYYFIFAPTLCYELNFPRSPRIRKR) are intracellular loop 1 (IL1). Residues 285 to 319 (RKRFLLRRVLEMLFFTQLQVGLIQQWMVPTIQNSM) traverse the membrane as a helical segment. Residues 320 to 326 (KPFKDMD) lie on the Lumenal side of the membrane. Residues 327–364 (YSRIIERLLKLAVPNHLIWLIFFYWLFHSCLNAVAELL) traverse the membrane as a helical segment. The Cytoplasmic portion of the chain corresponds to 365 to 410 (QFGDREFYRDWWNAESVTYFWQNWNIPVHKWCIRHFYKPMLRLGSN). The intracellular loop 2 (IL2) stretch occupies residues 365–410 (QFGDREFYRDWWNAESVTYFWQNWNIPVHKWCIRHFYKPMLRLGSN). An FYXDWWN motif motif is present at residues 371–377 (FYRDWWN). An acyl-CoA-binding positions include 385–393 (WQNWNIPVH), tyrosine 401, and arginine 415. The segment at 391–405 (PVHKWCIRHFYKPML) is amphipathic helix (AH). The helical transmembrane segment at 411-431 (KWMARTGVFWASAFFHEYLVS) threads the bilayer. Histidine 426 is an active-site residue. The Lumenal portion of the chain corresponds to 432–439 (IPLRMFRL). The helical transmembrane segment at 440–458 (WAFTAMMAQVPLAWIVNRF) threads the bilayer. Topologically, residues 459–460 (FQ) are cytoplasmic. The helical transmembrane segment at 461-492 (GNYGNAAVWVTLIIGQPVAVLMYVHDYYVLNY) threads the bilayer. Tyrosine 488 is a binding site for an acyl-CoA. The Lumenal segment spans residues 493–498 (DAPVGA).

The protein belongs to the membrane-bound acyltransferase family. Sterol o-acyltransferase subfamily. As to quaternary structure, homodimer or homotetramer; both forms have similar enzymatic activities.

Its subcellular location is the endoplasmic reticulum membrane. It carries out the reaction an acyl-CoA + a 1,2-diacyl-sn-glycerol = a triacyl-sn-glycerol + CoA. The catalysed reaction is all-trans-retinol + an acyl-CoA = an all-trans-retinyl ester + CoA. It catalyses the reaction 2-(9Z-octadecenoyl)-glycerol + (9Z)-octadecenoyl-CoA = 1,2-di-(9Z-octadecenoyl)-sn-glycerol + CoA. The enzyme catalyses 1,2-di-(9Z-octadecenoyl)-sn-glycerol + (9Z)-octadecenoyl-CoA = 1,2,3-tri-(9Z-octadecenoyl)-glycerol + CoA. It carries out the reaction all-trans-retinol + hexadecanoyl-CoA = all-trans-retinyl hexadecanoate + CoA. The catalysed reaction is 1-O-(9Z-octadecenyl)-glycerol + (9Z)-octadecenoyl-CoA = 1-O-(9Z-octadecyl)-3-(9Z-octadecenoyl)-glycerol + CoA. It catalyses the reaction 1-O-(9Z-octadecyl)-3-(9Z-octadecenoyl)-glycerol + (9Z)-octadecenoyl-CoA = 1-O-(9Z-octadecenyl)-2,3-di-(9Z-octadecenoyl)glycerol + CoA. The enzyme catalyses 1-(9Z-octadecenoyl)-glycerol + (9Z)-octadecenoyl-CoA = 1,2-di-(9Z-octadecenoyl)-glycerol + CoA. It carries out the reaction 1,2-di-(9Z-octadecenoyl)-glycerol + (9Z)-octadecenoate + H(+) = 1,2,3-tri-(9Z-octadecenoyl)-glycerol + H2O. The catalysed reaction is 1-octadecanoyl-2-(5Z,8Z,11Z,14Z-eicosatetraenoyl)-sn-glycerol + (9Z)-octadecenoyl-CoA = 1-octadecanoyl-2-(5Z,8Z,11Z,14Z)-eicosatetraenoyl-3-(9Z)-octadecenoyl-sn-glycerol + CoA. It catalyses the reaction hexadecane-1,2-diol + 2 hexadecanoyl-CoA = 1,2-O,O-dihexadecanoyl-1,2-hexadecanediol + 2 CoA. The enzyme catalyses hexadecane-1,2-diol + hexadecanoyl-CoA = 2-hydroxyhexadecyl hexadecanoate + CoA. It carries out the reaction 2-(9Z-octadecenoyl)-glycerol + hexadecanoyl-CoA = 1-hexadecanoyl-2-(9Z-octadecenoyl)-sn-glycerol + CoA. The catalysed reaction is 1,2-di-(9Z-octadecenoyl)-sn-glycerol + hexadecanoyl-CoA = 1,2-di-(9Z)-octadecenoyl-3-hexadecanoyl-sn-glycerol + CoA. It catalyses the reaction hexadecan-1-ol + hexadecanoyl-CoA = hexadecanyl hexadecanoate + CoA. The enzyme catalyses 13-cis-retinol + hexadecanoyl-CoA = 13-cis-retinyl hexadecanoate + CoA. It carries out the reaction 1,3-di-(9Z-octadecenoyl)-glycerol + (9Z)-octadecenoyl-CoA = 1,2,3-tri-(9Z-octadecenoyl)-glycerol + CoA. The catalysed reaction is 2,3-di-(9Z)-octadecenoyl-sn-glycerol + (9Z)-octadecenoyl-CoA = 1,2,3-tri-(9Z-octadecenoyl)-glycerol + CoA. Its pathway is lipid metabolism; glycerolipid metabolism. Its function is as follows. Catalyzes the terminal and only committed step in triacylglycerol synthesis by using diacylglycerol and fatty acyl CoA as substrates. Highly expressed in epithelial cells of the small intestine and its activity is essential for the absorption of dietary fats. In liver, plays a role in esterifying exogenous fatty acids to glycerol, and is required to synthesize fat for storage. Also present in female mammary glands, where it produces fat in the milk. May be involved in VLDL (very low density lipoprotein) assembly. In contrast to DGAT2 it is not essential for survival. Functions as the major acyl-CoA retinol acyltransferase (ARAT) in the skin, where it acts to maintain retinoid homeostasis and prevent retinoid toxicity leading to skin and hair disorders. Exhibits additional acyltransferase activities, includin acyl CoA:monoacylglycerol acyltransferase (MGAT), wax monoester and wax diester synthases. Also able to use 1-monoalkylglycerol (1-MAkG) as an acyl acceptor for the synthesis of monoalkyl-monoacylglycerol (MAMAG). This is Diacylglycerol O-acyltransferase 1 from Rattus norvegicus (Rat).